The chain runs to 312 residues: MISANRPIINLDLDLLRTFVAVADLNTFAAAAAAVCRTQSAVSQQMQRLEQLVGKELFARHGRNKLLTEHGIQLLGYARKILRFNDEACSSLMFSNLQGVLTIGASDESADTILPFLLNRVSSVYPKLALDVRVKRNAYMAEMLESQEVDLMVTTHRPSAFKALNLRTSPTHWYCAAEYILQKGEPIPLVLLDDPSPFRDMVLATLNKADIPWRLAYVASTLPAVRAAVKAGLGVTARPVEMMSPDLRVLSGVDGLPPLPDTEYLLCYDPSSNNELAQVIYQAMESYHNPWQYSPMSAPEGDDSLLIERDIE.

The HTH lysR-type domain occupies 11-68 (LDLDLLRTFVAVADLNTFAAAAAAVCRTQSAVSQQMQRLEQLVGKELFARHGRNKLLT). Residues 28–47 (FAAAAAAVCRTQSAVSQQMQ) constitute a DNA-binding region (H-T-H motif).

This sequence belongs to the LysR transcriptional regulatory family.

In terms of biological role, not known, does not seem to act on the proton translocating NADH dehydrogenase genes (nuoA-N) which are part of the lrhA operon. The protein is Probable HTH-type transcriptional regulator LrhA (lrhA) of Escherichia coli (strain K12).